The chain runs to 324 residues: Geranylgeranyl diphosphate synthase (324 aa).

Lys46, Arg49, and His78 together coordinate isopentenyl diphosphate. Residues Asp85 and Asp89 each coordinate Mg(2+). Residue Arg94 participates in an all-trans-polyprenyl diphosphate binding. Position 95 (Arg95) interacts with isopentenyl diphosphate. An all-trans-polyprenyl diphosphate-binding residues include Lys176, Thr177, Gln214, Lys231, and Lys241.

The protein belongs to the FPP/GGPP synthase family. The cofactor is Mg(2+).

It catalyses the reaction isopentenyl diphosphate + (2E,6E)-farnesyl diphosphate = (2E,6E,10E)-geranylgeranyl diphosphate + diphosphate. Its pathway is isoprenoid biosynthesis; geranylgeranyl diphosphate biosynthesis; geranylgeranyl diphosphate from farnesyl diphosphate and isopentenyl diphosphate: step 1/1. Functionally, catalyzes the sequential condensation of isopentenyl pyrophosphate with the allylic pyrophosphates to yield geranylgeranyl diphosphate (GGPP) which is a precursor of the ether-linked lipids. In Methanosarcina mazei (strain ATCC BAA-159 / DSM 3647 / Goe1 / Go1 / JCM 11833 / OCM 88) (Methanosarcina frisia), this protein is Geranylgeranyl diphosphate synthase.